The chain runs to 1013 residues: Prominin-like protein (1013 aa).

Residues 32–52 (IAYLAICGLSVAIFGFALATL) form a helical membrane-spanning segment. N-linked (GlcNAc...) asparagine glycans are attached at residues N99 and N116. 3 consecutive transmembrane segments (helical) span residues 215-235 (CGIC…IAFV), 489-509 (VVSL…IFAL), and 535-555 (LLLA…VGLF). N-linked (GlcNAc...) asparagine glycosylation is found at N576, N618, N803, and N824. The chain crosses the membrane as a helical span at residues 852–872 (INGFWVGILLCALLFLPILFV). A disordered region spans residues 918-1013 (ANVPKKRRKA…YYYPGASEQD (96 aa)). An N-linked (GlcNAc...) asparagine glycan is attached at N949. Over residues 950–963 (RSGGDRGGGGGDGA) the composition is skewed to gly residues.

It belongs to the prominin family.

The protein localises to the membrane. This chain is Prominin-like protein, found in Drosophila melanogaster (Fruit fly).